The sequence spans 142 residues: Large ribosomal subunit protein uL23 (142 aa).

K61 is covalently cross-linked (Glycyl lysine isopeptide (Lys-Gly) (interchain with G-Cter in SUMO)).

It belongs to the universal ribosomal protein uL23 family. As to quaternary structure, component of the large ribosomal subunit (LSU). Mature yeast ribosomes consist of a small (40S) and a large (60S) subunit. The 40S small subunit contains 1 molecule of ribosomal RNA (18S rRNA) and 33 different proteins (encoded by 57 genes). The large 60S subunit contains 3 rRNA molecules (25S, 5.8S and 5S rRNA) and 46 different proteins (encoded by 81 genes). uL23 is associated with the polypeptide exit tunnel.

It is found in the cytoplasm. Its function is as follows. Component of the ribosome, a large ribonucleoprotein complex responsible for the synthesis of proteins in the cell. The small ribosomal subunit (SSU) binds messenger RNAs (mRNAs) and translates the encoded message by selecting cognate aminoacyl-transfer RNA (tRNA) molecules. The large subunit (LSU) contains the ribosomal catalytic site termed the peptidyl transferase center (PTC), which catalyzes the formation of peptide bonds, thereby polymerizing the amino acids delivered by tRNAs into a polypeptide chain. The nascent polypeptides leave the ribosome through a tunnel in the LSU and interact with protein factors that function in enzymatic processing, targeting, and the membrane insertion of nascent chains at the exit of the ribosomal tunnel. uL23 is a major component of the universal docking site for these factors at the polypeptide exit tunnel. This chain is Large ribosomal subunit protein uL23, found in Saccharomyces cerevisiae (strain ATCC 204508 / S288c) (Baker's yeast).